Reading from the N-terminus, the 292-residue chain is Tetratricopeptide repeat protein 1 (292 aa).

The interval 20 to 125 (TDPQEAECLH…SSRLKEEGNE (106 aa)) is disordered. Composition is skewed to basic and acidic residues over residues 36-49 (KEQH…KDVD) and 75-85 (GADKLENKPED). Positions 86–98 (DMNPSELDEEYLM) are enriched in acidic residues. Ser-90 bears the Phosphoserine mark. Residues 99-125 (ELEKNMPDEEKKRRREESSRLKEEGNE) show a composition bias toward basic and acidic residues. TPR repeat units follow at residues 116–149 (SSRL…CPSC), 155–188 (SVLF…NPSY), and 189–222 (IRAI…DPSV).

As to quaternary structure, interacts with the GAP domain of NF1. Interacts (via TPR repeats) with HSP90AA1 and HSPA8.

This is Tetratricopeptide repeat protein 1 (TTC1) from Bos taurus (Bovine).